The sequence spans 234 residues: MQFFPPLQRATLIQRYKRFLADVITPDGRELTLHCPNTGAMTGCATPGDTVWYSTSENTKRKYPHTWELTETQAGALICVNTLWANRLTKEALENDWLSELSGYSELRSEVKYGAERSRIDFMLQAGFQPDCYIEVKSVTLADHGQGYFPDAITQRGQKHLRELMSVAAEGQRAVILFAVLHSAITRFSPARHIDMKYAQLLTEAQQRGVEILAYKAEISAEGMSLKKLLPITL.

The segment at residues 201–220 (LLTEAQQRGVEILAYKAEIS) is a DNA-binding region (H-T-H motif).

This sequence belongs to the SfsA family.

Binds to DNA non-specifically. Could be a regulatory factor involved in maltose metabolism. The polypeptide is Sugar fermentation stimulation protein A (Escherichia fergusonii (strain ATCC 35469 / DSM 13698 / CCUG 18766 / IAM 14443 / JCM 21226 / LMG 7866 / NBRC 102419 / NCTC 12128 / CDC 0568-73)).